We begin with the raw amino-acid sequence, 545 residues long: Threonine--tRNA ligase catalytic subunit (545 aa).

The catalytic stretch occupies residues Asp139–Pro433. Zn(2+)-binding residues include Cys231, His282, and His410.

It belongs to the class-II aminoacyl-tRNA synthetase family. In terms of assembly, homodimer. Probably interacts with its editing subunit. It depends on Zn(2+) as a cofactor.

It localises to the cytoplasm. The catalysed reaction is tRNA(Thr) + L-threonine + ATP = L-threonyl-tRNA(Thr) + AMP + diphosphate + H(+). Functionally, catalyzes the attachment of threonine to tRNA(Thr) in a two-step reaction: L-threonine is first activated by ATP to form Thr-AMP and then transferred to the acceptor end of tRNA(Thr). Also activates L-serine and transfers it to tRNA(Thr) but cannot deacylate incorrectly charged amino acid; unlike most archaea the editing function is found in a freestanding protein. This chain is Threonine--tRNA ligase catalytic subunit, found in Saccharolobus islandicus (strain M.16.27) (Sulfolobus islandicus).